A 418-amino-acid chain; its full sequence is Serine hydroxymethyltransferase (418 aa).

(6S)-5,6,7,8-tetrahydrofolate contacts are provided by residues leucine 121 and 125–127; that span reads GHL. Lysine 230 carries the N6-(pyridoxal phosphate)lysine modification. Residue 355-357 participates in (6S)-5,6,7,8-tetrahydrofolate binding; sequence SPF.

Belongs to the SHMT family. As to quaternary structure, homodimer. Pyridoxal 5'-phosphate serves as cofactor.

Its subcellular location is the cytoplasm. It catalyses the reaction (6R)-5,10-methylene-5,6,7,8-tetrahydrofolate + glycine + H2O = (6S)-5,6,7,8-tetrahydrofolate + L-serine. It functions in the pathway one-carbon metabolism; tetrahydrofolate interconversion. Its pathway is amino-acid biosynthesis; glycine biosynthesis; glycine from L-serine: step 1/1. In terms of biological role, catalyzes the reversible interconversion of serine and glycine with tetrahydrofolate (THF) serving as the one-carbon carrier. This reaction serves as the major source of one-carbon groups required for the biosynthesis of purines, thymidylate, methionine, and other important biomolecules. Also exhibits THF-independent aldolase activity toward beta-hydroxyamino acids, producing glycine and aldehydes, via a retro-aldol mechanism. This Streptococcus agalactiae serotype V (strain ATCC BAA-611 / 2603 V/R) protein is Serine hydroxymethyltransferase.